Here is a 322-residue protein sequence, read N- to C-terminus: Glycerate dehydrogenase (322 aa).

Residues 158 to 159 (SI), Asp178, 239 to 241 (TAR), and Asp265 contribute to the NAD(+) site. Arg241 is an active-site residue. Glu270 is a catalytic residue. His288 functions as the Proton donor in the catalytic mechanism. An NAD(+)-binding site is contributed by 288–291 (HIGS).

Belongs to the D-isomer specific 2-hydroxyacid dehydrogenase family. In terms of assembly, homodimer.

It carries out the reaction (R)-glycerate + NAD(+) = 3-hydroxypyruvate + NADH + H(+). Its pathway is one-carbon metabolism; formaldehyde assimilation via serine pathway. Functionally, active on hydroxypyruvate and glyoxylate. The protein is Glycerate dehydrogenase of Hyphomicrobium methylovorum.